The sequence spans 290 residues: Cytochrome bo(3) ubiquinol oxidase subunit 2 (290 aa).

Positions 1 to 24 are cleaved as a signal peptide; that stretch reads MISINFNNFFKTLLLILIAFTLHG. C25 is lipidated: N-palmitoyl cysteine. C25 is lipidated: S-diacylglycerol cysteine. Over 25-42 the chain is Extracellular; sequence CDSILFNPHGIIAIQECS. Residues 43–63 form a helical membrane-spanning segment; sequence ILLISFLIMLFVIIPVIFMTI. Topologically, residues 64–87 are cytoplasmic; that stretch reads YFSVKYRASNINAKYKPDWCDSKK. The chain crosses the membrane as a helical span at residues 88–108; the sequence is IEIIVWTIPISIILFLAFVTW. Over 109-290 the chain is Extracellular; it reads NYSHILDPKK…TYSKNKVFKH (182 aa).

It belongs to the cytochrome c oxidase subunit 2 family. In terms of assembly, heterooctamer of two A chains, two B chains, two C chains and two D chains.

Its subcellular location is the cell membrane. Cytochrome bo(3) ubiquinol terminal oxidase is the component of the aerobic respiratory chain of E.coli that predominates when cells are grown at high aeration. Has proton pump activity across the membrane in addition to electron transfer, pumping 2 protons/electron. The protein is Cytochrome bo(3) ubiquinol oxidase subunit 2 (cyoA) of Buchnera aphidicola subsp. Schizaphis graminum (strain Sg).